Here is a 133-residue protein sequence, read N- to C-terminus: Salmonella pathogenicity island 2 protein C (133 aa).

Interacts with the mammalian NIPSNAP3A and HOOK3 proteins in infected cells.

The protein localises to the secreted. The protein resides in the cytoplasm. Virulence protein that plays a central role in mammalian macrophage infection, by inhibiting phagosome-lysosome fusion and cellular trafficking, including trafficking of organelles that are devoid of Salmonella. May act by disrupting the function of the mammalian HOOK3 protein, a protein involved in the cellular traffic. Also required for actin ADP-ribosylase SpvB activity. In Salmonella typhimurium (strain 14028s / SGSC 2262), this protein is Salmonella pathogenicity island 2 protein C (spiC).